A 260-amino-acid polypeptide reads, in one-letter code: Carbonic anhydrase 2 (260 aa).

Residue S2 is modified to N-acetylserine. The residue at position 2 (S2) is a Phosphoserine. An Alpha-carbonic anhydrase domain is found at 3–259 (HHWGYGEHNG…LKNRQVRVFP (257 aa)). The active-site Proton donor/acceptor is the H64. Zn(2+)-binding residues include H94, H96, and H119. Phosphoserine is present on residues S165 and S172. Substrate is bound at residue 198 to 199 (TN).

It belongs to the alpha-carbonic anhydrase family. In terms of assembly, interacts with SLC4A4 and SLC26A6. Interaction with SLC4A7 regulates SLC4A7 transporter activity. Zn(2+) is required as a cofactor.

It is found in the cytoplasm. Its subcellular location is the cell membrane. It catalyses the reaction hydrogencarbonate + H(+) = CO2 + H2O. The enzyme catalyses urea = cyanamide + H2O. Inhibited by acetazolamide. Catalyzes the reversible hydration of carbon dioxide. Can also hydrate cyanamide to urea. Involved in the regulation of fluid secretion into the anterior chamber of the eye. Essential for bone resorption and osteoclast differentiation. Contributes to intracellular pH regulation in the duodenal upper villous epithelium during proton-coupled peptide absorption. Stimulates the chloride-bicarbonate exchange activity of SLC26A6. The chain is Carbonic anhydrase 2 (CA2) from Ovis aries (Sheep).